Consider the following 538-residue polypeptide: Nectin-2 (538 aa).

Positions 1–31 (MARAAALLPSRSPPTPLLWPLLLLLLLETGA) are cleaved as a signal peptide. One can recognise an Ig-like V-type domain in the interval 32-156 (QDVRVQVLPE…KGSVRGMTWL (125 aa)). Topologically, residues 32–360 (QDVRVQVLPE…NTAGAGATGG (329 aa)) are extracellular. Cystine bridges form between Cys54–Cys140, Cys183–Cys238, and Cys283–Cys329. Asn137 carries an N-linked (GlcNAc...) asparagine glycan. Ig-like C2-type domains follow at residues 162–256 (PKNQ…VTLS) and 261–345 (PEVS…QVIF). Residue Asn324 is glycosylated (N-linked (GlcNAc...) asparagine). Residues 361–381 (IIGGIIAAIIATAVAATGILI) form a helical membrane-spanning segment. Residues 382–538 (CRQQRKEQTL…GFVMSRAMYV (157 aa)) are Cytoplasmic-facing. The disordered stretch occupies residues 390–414 (TLQGAEEDEDLEGPPSYKPPTPKAK). Thr410 is subject to Phosphothreonine. Residues Ser433, Gly465, and Gly470 each carry the phosphoserine modification. The interval 462-489 (ERSGPLHPGATSLGSPIPVPPGPPAVED) is disordered.

This sequence belongs to the nectin family. In terms of assembly, can form trans-heterodimers with NECTIN3. Interacts with CD226 or with PVRIG; these interactions are competitive and have a differential functional outcome on T-cell activation, either positive or negative, respectively. Binds with low affinity to TIGIT. (Microbial infection) Interacts with herpes simplex virus 1 (HHV-1) mutant Rid1, herpes simplex virus 1 (HHV-2) and pseudorabies virus (PRV) envelope glycoprotein D. Ubiquitous.

The protein resides in the cell membrane. In terms of biological role, modulator of T-cell signaling. Can be either a costimulator of T-cell function, or a coinhibitor, depending on the receptor it binds to. Upon binding to CD226, stimulates T-cell proliferation and cytokine production, including that of IL2, IL5, IL10, IL13, and IFNG. Upon interaction with PVRIG, inhibits T-cell proliferation. These interactions are competitive. Probable cell adhesion protein. Its function is as follows. (Microbial infection) Acts as a receptor for herpes simplex virus 1 (HHV-1) mutant Rid1, herpes simplex virus 1 (HHV-2) and pseudorabies virus (PRV). This chain is Nectin-2, found in Homo sapiens (Human).